The primary structure comprises 138 residues: Holo-[acyl-carrier-protein] synthase (138 aa).

Aspartate 8 and glutamate 56 together coordinate Mg(2+).

This sequence belongs to the P-Pant transferase superfamily. AcpS family. It depends on Mg(2+) as a cofactor.

It is found in the cytoplasm. The catalysed reaction is apo-[ACP] + CoA = holo-[ACP] + adenosine 3',5'-bisphosphate + H(+). In terms of biological role, transfers the 4'-phosphopantetheine moiety from coenzyme A to a Ser of acyl-carrier-protein. This is Holo-[acyl-carrier-protein] synthase from Thermoanaerobacter pseudethanolicus (strain ATCC 33223 / 39E) (Clostridium thermohydrosulfuricum).